A 148-amino-acid polypeptide reads, in one-letter code: MEHTFIMIKPDGVQRGLVGEIIGRFEKKGFSLKGLKLLTVDQAFAEKHYADLSAKPFFNGLVEYIISGPVVAMVWEGKNVVTTGRKIIGATNPAESAPGTIRGDFAIDIGRNVIHGSDAVESAKKEIALWFPEGVANWSSSLHPWIYE.

ATP contacts are provided by Lys9, Phe57, Arg85, Thr91, Arg102, and Asn112. His115 functions as the Pros-phosphohistidine intermediate in the catalytic mechanism.

This sequence belongs to the NDK family. Mg(2+) serves as cofactor.

The enzyme catalyses a 2'-deoxyribonucleoside 5'-diphosphate + ATP = a 2'-deoxyribonucleoside 5'-triphosphate + ADP. It carries out the reaction a ribonucleoside 5'-diphosphate + ATP = a ribonucleoside 5'-triphosphate + ADP. Its function is as follows. Major role in the synthesis of nucleoside triphosphates other than ATP. The ATP gamma phosphate is transferred to the NDP beta phosphate via a ping-pong mechanism, using a phosphorylated active-site intermediate. The chain is Nucleoside diphosphate kinase B from Flaveria bidentis (Coastal plain yellowtops).